Reading from the N-terminus, the 477-residue chain is Cysteine--tRNA ligase (477 aa).

C28 is a binding site for Zn(2+). The short motif at 30–40 (PTVYDYPHLGH) is the 'HIGH' region element. Zn(2+) is bound by residues C208, H233, and E237. The 'KMSKS' region signature appears at 265–269 (KMSKS). An ATP-binding site is contributed by K268.

Belongs to the class-I aminoacyl-tRNA synthetase family. It depends on Zn(2+) as a cofactor.

Its subcellular location is the cytoplasm. The enzyme catalyses tRNA(Cys) + L-cysteine + ATP = L-cysteinyl-tRNA(Cys) + AMP + diphosphate. The protein is Cysteine--tRNA ligase of Pyrococcus furiosus (strain ATCC 43587 / DSM 3638 / JCM 8422 / Vc1).